The sequence spans 120 residues: Protein BEX4 (120 aa).

The interval 1 to 54 is disordered; sequence MESKEELAANNLNGENAQQENEGGEQAPTQNEEESRHLGGGEGQKPGGNIRRGR. A compositionally biased stretch (low complexity) spans 8-27; the sequence is AANNLNGENAQQENEGGEQA. An interaction with SIRT2 region spans residues 31–90; that stretch reads NEEESRHLGGGEGQKPGGNIRRGRVRRLVPNFRWAIPNRHIEHNEARDDVERFVGQMMEI. The interaction with alpha-tubulin stretch occupies residues 31–120; it reads NEEESRHLGG…DNHYDFCLIP (90 aa). C117 lines the Zn(2+) pocket.

Belongs to the BEX family. Interacts with alpha-tubulin. Interacts with SIRT2. Ubiquitinated and degraded by the proteasome. Very high expression in heart, skeletal muscle, liver, and kidney. The levels of expression are uniform throughout the brain.

It localises to the cytoplasm. The protein resides in the cytoskeleton. Its subcellular location is the spindle pole. The protein localises to the nucleus. In terms of biological role, may play a role in microtubule deacetylation by negatively regulating the SIRT2 deacetylase activity toward alpha-tubulin and thereby participate in the control of cell cycle progression and genomic stability. In absence of reductive stress, acts as a pseudosubstrate for the CRL2(FEM1B) complex: associates with FEM1B via zinc, thereby preventing association between FEM1B and its substrates. This is Protein BEX4 from Homo sapiens (Human).